Reading from the N-terminus, the 941-residue chain is Bifunctional uridylyltransferase/uridylyl-removing enzyme (941 aa).

Residues 1 to 372 (MAKHDLSDAT…RFAHRPRRIP (372 aa)) form a uridylyltransferase region. Residues 373-728 (GTPEFIEDRG…VRTHSFHAIT (356 aa)) are uridylyl-removing. Positions 489–611 (VDEHLIRSVG…VQSLDRLRML (123 aa)) constitute an HD domain. ACT domains are found at residues 729-810 (EITV…EVIA) and 840-919 (VIEI…LREQ). The disordered stretch occupies residues 916–941 (LREQMPSGIIAPAATKSPAAEKKARV).

It belongs to the GlnD family. The cofactor is Mg(2+).

The enzyme catalyses [protein-PII]-L-tyrosine + UTP = [protein-PII]-uridylyl-L-tyrosine + diphosphate. It carries out the reaction [protein-PII]-uridylyl-L-tyrosine + H2O = [protein-PII]-L-tyrosine + UMP + H(+). Uridylyltransferase (UTase) activity is inhibited by glutamine, while glutamine activates uridylyl-removing (UR) activity. Its function is as follows. Modifies, by uridylylation and deuridylylation, the PII regulatory proteins (GlnB and homologs), in response to the nitrogen status of the cell that GlnD senses through the glutamine level. Under low glutamine levels, catalyzes the conversion of the PII proteins and UTP to PII-UMP and PPi, while under higher glutamine levels, GlnD hydrolyzes PII-UMP to PII and UMP (deuridylylation). Thus, controls uridylylation state and activity of the PII proteins, and plays an important role in the regulation of nitrogen assimilation and metabolism. This Allorhizobium ampelinum (strain ATCC BAA-846 / DSM 112012 / S4) (Agrobacterium vitis (strain S4)) protein is Bifunctional uridylyltransferase/uridylyl-removing enzyme.